An 84-amino-acid polypeptide reads, in one-letter code: Mitochondrial import inner membrane translocase subunit Tim9 (84 aa).

Residues 28-52 (CFMDCVKDFTTREVKPEETTCSESC) carry the Twin CX3C motif motif. 2 disulfide bridges follow: Cys-28–Cys-52 and Cys-32–Cys-48.

This sequence belongs to the small Tim family. Heterohexamer; composed of 3 copies of TIMM9 and 3 copies of TIMM10/TIM10A, named soluble 70 kDa complex. The complex forms a 6-bladed alpha-propeller structure and associates with the TIMM22 component of the TIM22 complex. Interacts with multi-pass transmembrane proteins in transit.

The protein resides in the mitochondrion inner membrane. In terms of biological role, mitochondrial intermembrane chaperone that participates in the import and insertion of multi-pass transmembrane proteins into the mitochondrial inner membrane. May also be required for the transfer of beta-barrel precursors from the TOM complex to the sorting and assembly machinery (SAM complex) of the outer membrane. Acts as a chaperone-like protein that protects the hydrophobic precursors from aggregation and guide them through the mitochondrial intermembrane space. The sequence is that of Mitochondrial import inner membrane translocase subunit Tim9 (timm9) from Danio rerio (Zebrafish).